Reading from the N-terminus, the 361-residue chain is Probable lipid desaturase ADS3.2, chloroplastic (361 aa).

The N-terminal 57 residues, 1 to 57 (MMSLSTTLKPLSHFSPFVKRHNPKTNNTLFTLDTHNFTNSFWSKRGGSVSHRKHTVV), are a transit peptide targeting the chloroplast. A run of 2 helical transmembrane segments spans residues 99–118 (LVIF…YFSW) and 122–139 (WVFP…TLSY). Positions 140–145 (HRNLSH) match the Histidine box-1 motif. The Histidine box-2 signature appears at 177-181 (HRYHH). The helical transmembrane segment at 246–266 (FLFYFCGGMPLLVWGIGITIA) threads the bilayer. Positions 309 to 313 (HNNHH) match the Histidine box-3 motif.

The protein belongs to the fatty acid desaturase type 1 family. Requires Fe(2+) as cofactor.

It is found in the plastid. Its subcellular location is the chloroplast membrane. The protein operates within lipid metabolism; polyunsaturated fatty acid biosynthesis. This Arabidopsis thaliana (Mouse-ear cress) protein is Probable lipid desaturase ADS3.2, chloroplastic.